Here is a 101-residue protein sequence, read N- to C-terminus: UPF0473 protein SUB1774 (101 aa).

Belongs to the UPF0473 family.

The protein is UPF0473 protein SUB1774 of Streptococcus uberis (strain ATCC BAA-854 / 0140J).